The following is a 294-amino-acid chain: Nucleotide-binding protein Swol_0262 (294 aa).

Glycine 15–threonine 22 lines the ATP pocket. Residue aspartate 65–glycine 68 participates in GTP binding.

Belongs to the RapZ-like family.

Displays ATPase and GTPase activities. This Syntrophomonas wolfei subsp. wolfei (strain DSM 2245B / Goettingen) protein is Nucleotide-binding protein Swol_0262.